A 295-amino-acid polypeptide reads, in one-letter code: Zinc finger transcription factor pqm-1 (295 aa).

The disordered stretch occupies residues 1–23 (MSFLNNDFGSPPATSSPPTTMPK). Positions 10–22 (SPPATSSPPTTMP) are enriched in low complexity. The C2H2-type 1; degenerate zinc finger occupies 161–183 (YMCTVCRKVYGRYNSVSYHVTIY). A C2H2-type 2 zinc finger spans residues 227-249 (RKCPHCRHVSKSPAMLEKHIRRH).

The protein belongs to the krueppel C2H2-type zinc-finger protein family. As to quaternary structure, interacts with ceh-60.

It is found in the chromosome. The protein resides in the nucleus. It localises to the cytoplasm. Zinc finger transcription factor which acts as both a transcriptional activator and repressor. Binds to the promoters of genes that contain the 5'-CTTATCA-3' DNA consensus sequence in their regulatory region. Functions downstream of the Insulin/IGF-1-like signaling (IIS) mediated pathway. Involved in normal development, lifespan, stress response, lipid metabolism, innate immunity and exit from the developmentally arrested larval state known as dauer. Required for stress-induced expression of hsp-90 and resistance to heat stress, perhaps as part of a systemic stress signaling pathway. Involved in maintenance of proteostasis. Under hypoxic stress increases lipid levels by positively regulating fatty acid synthesis via fat-7 expression. Associates with homeobox protein ceh-60 at the promoters of some stress-responsive genes to regulate expression; may require phosphorylation for transcriptional repression activity. Acts downstream of nhr-14 to activate transcription of intestinal metal transporter smf-3, modulating innate immunity and iron uptake. May act downstream of the mTORC2 signaling mediated pathway. May act in a mutually exclusive manner with the FOXO transcription factor daf-16. The sequence is that of Zinc finger transcription factor pqm-1 from Caenorhabditis elegans.